Here is a 596-residue protein sequence, read N- to C-terminus: MECLIIAEDIIQKVKDLNDIVDIVSEKVKLKRTGRNYSGLCPFHHEKTPSFSVSQDKQIYKCFGCGEAGNVITFVMKTKNFSFVEAVKYLADKVNITIDDNKDKYYAKNKEKYDKLYSMNVEAARYFFRNLDSNSKAKKYFLDRGINQKTMRRFGLGYAKDDWRQLLSFMKSKGYTELELIEAGLIVQKNKAVYDRFRNRVIFPVFDYKGKVIGFGGRVLDDSKPKYLNSPETKIFKKGTNLYGLNFAVKNNIGDTIIIVEGYMDCISLHQYGINNVVASLGTALTKDQAKLLKRYASKVVISYDADTAGQAATLRGFDILREAGFDIKIIKIPDGKDPDEFVRKNGKEAFMRLVENAVSIIDYRINRAFENVNLKDSESVIKYVKDISEIIEELDPVEKDVYIKKISDKTGIREQAIYDLISTDIQKSGNNIEKMNKNSNYGQNLYVESAHVKSERYLLRLMIEHKDIRSYIESKISADDLIMESHKKIYNIILNFEDNLSSDLKSKFGFIESRCDDGESSSEIVKIEEQNIMLSENNVKDLVDDFITNIKKFRLEESKKKIMSEIKGLEEKGLFDETIELIKRMEEIQNQLDNL.

The CHC2-type zinc finger occupies Cys-41–Cys-65. The region spanning Asp-255 to Gly-336 is the Toprim domain. Mg(2+)-binding residues include Glu-261, Asp-305, and Asp-307.

Belongs to the DnaG primase family. As to quaternary structure, monomer. Interacts with DnaB. Zn(2+) is required as a cofactor. Requires Mg(2+) as cofactor.

It catalyses the reaction ssDNA + n NTP = ssDNA/pppN(pN)n-1 hybrid + (n-1) diphosphate.. RNA polymerase that catalyzes the synthesis of short RNA molecules used as primers for DNA polymerase during DNA replication. The protein is DNA primase of Clostridium acetobutylicum (strain ATCC 824 / DSM 792 / JCM 1419 / IAM 19013 / LMG 5710 / NBRC 13948 / NRRL B-527 / VKM B-1787 / 2291 / W).